The primary structure comprises 453 residues: Nuclear and cytoplasmic polyadenylated RNA-binding protein PUB1 (453 aa).

The tract at residues 1-67 (MSENNEEQHQ…PSVVPANAIT (67 aa)) is disordered. The residue at position 2 (Ser2) is an N-acetylserine. 2 RRM domains span residues 75 to 152 (RVLY…WAFQ) and 162 to 240 (FNLF…WAAK). The tract at residues 241–262 (RDNNNNNNYQQRRNYGNNNRGG) is disordered. Over residues 244–262 (NNNNNYQQRRNYGNNNRGG) the composition is skewed to low complexity. Omega-N-methylarginine is present on Arg260. An RNA-binding RGG-box region spans residues 260 to 264 (RGGFR). The 73-residue stretch at 341 to 413 (TTAYIGNIPH…RNLRTGWGKE (73 aa)) folds into the RRM 3 domain. The segment at 419–453 (PQQQQQGGQPLIMNDQQQPVMSEQQQQQQQQQQQQ) is disordered. Low complexity predominate over residues 434–453 (QQQPVMSEQQQQQQQQQQQQ).

Interacts with NAB2.

Its subcellular location is the cytoplasm. The protein localises to the nucleus. The protein resides in the P-body. It localises to the stress granule. In terms of biological role, may be associated with hnRNA within the nucleus and remains associated during nucleocytoplasmic mRNA transport, once the proteins are in the cytoplasm, disassembly of PUB1-RNA complexes may occur prior to PAB1 binding and formation of a translationally competent RNP complex. Binds to polyadenylated RNA; prefers to bind poly(rU); binds to T-rich single-stranded DNA. The chain is Nuclear and cytoplasmic polyadenylated RNA-binding protein PUB1 from Saccharomyces cerevisiae (strain ATCC 204508 / S288c) (Baker's yeast).